Reading from the N-terminus, the 356-residue chain is UDP-N-acetylglucosamine--N-acetylmuramyl-(pentapeptide) pyrophosphoryl-undecaprenol N-acetylglucosamine transferase (356 aa).

Arg166, Ser196, and Gln290 together coordinate UDP-N-acetyl-alpha-D-glucosamine.

The protein belongs to the glycosyltransferase 28 family. MurG subfamily.

The protein resides in the cell membrane. It catalyses the reaction Mur2Ac(oyl-L-Ala-gamma-D-Glu-L-Lys-D-Ala-D-Ala)-di-trans,octa-cis-undecaprenyl diphosphate + UDP-N-acetyl-alpha-D-glucosamine = beta-D-GlcNAc-(1-&gt;4)-Mur2Ac(oyl-L-Ala-gamma-D-Glu-L-Lys-D-Ala-D-Ala)-di-trans,octa-cis-undecaprenyl diphosphate + UDP + H(+). Its pathway is cell wall biogenesis; peptidoglycan biosynthesis. Cell wall formation. Catalyzes the transfer of a GlcNAc subunit on undecaprenyl-pyrophosphoryl-MurNAc-pentapeptide (lipid intermediate I) to form undecaprenyl-pyrophosphoryl-MurNAc-(pentapeptide)GlcNAc (lipid intermediate II). This chain is UDP-N-acetylglucosamine--N-acetylmuramyl-(pentapeptide) pyrophosphoryl-undecaprenol N-acetylglucosamine transferase, found in Staphylococcus aureus (strain MW2).